We begin with the raw amino-acid sequence, 146 residues long: Hemoglobin subunit beta (146 aa).

Val1 bears the N-acetylvaline mark. Residues His2 to His146 enclose the Globin domain. Thr12 bears the Phosphothreonine mark. Ser44 is modified (phosphoserine). Lys59 bears the N6-acetyllysine mark. His63 serves as a coordination point for heme b. Lys82 carries the post-translational modification N6-acetyllysine. His92 is a heme b binding site. The residue at position 93 (Cys93) is an S-nitrosocysteine. Position 144 is an N6-acetyllysine (Lys144).

Belongs to the globin family. As to quaternary structure, heterotetramer of two alpha chains and two beta chains. Red blood cells.

Involved in oxygen transport from the lung to the various peripheral tissues. This chain is Hemoglobin subunit beta (HBB), found in Lutra lutra (European river otter).